Here is a 415-residue protein sequence, read N- to C-terminus: Serine hydroxymethyltransferase (415 aa).

Residues Leu-117 and 121–123 each bind (6S)-5,6,7,8-tetrahydrofolate; that span reads GHL. Position 226 is an N6-(pyridoxal phosphate)lysine (Lys-226). Residues Glu-241 and 349-351 contribute to the (6S)-5,6,7,8-tetrahydrofolate site; that span reads SPF.

The protein belongs to the SHMT family. Homodimer. Pyridoxal 5'-phosphate is required as a cofactor.

The protein localises to the cytoplasm. It carries out the reaction (6R)-5,10-methylene-5,6,7,8-tetrahydrofolate + glycine + H2O = (6S)-5,6,7,8-tetrahydrofolate + L-serine. It functions in the pathway one-carbon metabolism; tetrahydrofolate interconversion. Its pathway is amino-acid biosynthesis; glycine biosynthesis; glycine from L-serine: step 1/1. Functionally, catalyzes the reversible interconversion of serine and glycine with tetrahydrofolate (THF) serving as the one-carbon carrier. This reaction serves as the major source of one-carbon groups required for the biosynthesis of purines, thymidylate, methionine, and other important biomolecules. Also exhibits THF-independent aldolase activity toward beta-hydroxyamino acids, producing glycine and aldehydes, via a retro-aldol mechanism. The protein is Serine hydroxymethyltransferase of Geotalea daltonii (strain DSM 22248 / JCM 15807 / FRC-32) (Geobacter daltonii).